The following is a 424-amino-acid chain: UDP-N-acetylglucosamine 1-carboxyvinyltransferase (424 aa).

22–23 (KN) lines the phosphoenolpyruvate pocket. Residue R98 coordinates UDP-N-acetyl-alpha-D-glucosamine. The Proton donor role is filled by C122. At C122 the chain carries 2-(S-cysteinyl)pyruvic acid O-phosphothioketal. UDP-N-acetyl-alpha-D-glucosamine contacts are provided by residues 127-131 (RPVDQ), D312, and I334.

The protein belongs to the EPSP synthase family. MurA subfamily.

Its subcellular location is the cytoplasm. It catalyses the reaction phosphoenolpyruvate + UDP-N-acetyl-alpha-D-glucosamine = UDP-N-acetyl-3-O-(1-carboxyvinyl)-alpha-D-glucosamine + phosphate. It functions in the pathway cell wall biogenesis; peptidoglycan biosynthesis. Its function is as follows. Cell wall formation. Adds enolpyruvyl to UDP-N-acetylglucosamine. The polypeptide is UDP-N-acetylglucosamine 1-carboxyvinyltransferase (Xanthomonas campestris pv. campestris (strain B100)).